The sequence spans 170 residues: MDLKNFIRNIDDFPKPGIDFKDVTTLFKDGDAFKYAVDSIVEELKDKDVDLVIGPEARGFLMGTPVAYALGVGFVPIRKPGKLPGEVESYEYGLEYGTDTLEIHKDAIKKGQKVAIVDDLLATGGTMEAAAKLVEKLGGEVVSMQFLIELKFLNGREKLSNYDVNSLIKY.

Belongs to the purine/pyrimidine phosphoribosyltransferase family. As to quaternary structure, homodimer.

It localises to the cytoplasm. The catalysed reaction is AMP + diphosphate = 5-phospho-alpha-D-ribose 1-diphosphate + adenine. It functions in the pathway purine metabolism; AMP biosynthesis via salvage pathway; AMP from adenine: step 1/1. Catalyzes a salvage reaction resulting in the formation of AMP, that is energically less costly than de novo synthesis. The chain is Adenine phosphoribosyltransferase from Clostridioides difficile (strain 630) (Peptoclostridium difficile).